A 123-amino-acid polypeptide reads, in one-letter code: Small ribosomal subunit protein uS12 (123 aa).

At Asp-89 the chain carries 3-methylthioaspartic acid. Residues 100-123 (GSLDTSGVKDRKQGRSKYGTKRPK) form a disordered region. Residues 113–123 (GRSKYGTKRPK) are compositionally biased toward basic residues.

The protein belongs to the universal ribosomal protein uS12 family. In terms of assembly, part of the 30S ribosomal subunit. Contacts proteins S8 and S17. May interact with IF1 in the 30S initiation complex.

Functionally, with S4 and S5 plays an important role in translational accuracy. Interacts with and stabilizes bases of the 16S rRNA that are involved in tRNA selection in the A site and with the mRNA backbone. Located at the interface of the 30S and 50S subunits, it traverses the body of the 30S subunit contacting proteins on the other side and probably holding the rRNA structure together. The combined cluster of proteins S8, S12 and S17 appears to hold together the shoulder and platform of the 30S subunit. This chain is Small ribosomal subunit protein uS12, found in Ectopseudomonas mendocina (strain ymp) (Pseudomonas mendocina).